Here is a 216-residue protein sequence, read N- to C-terminus: Adenylate kinase (216 aa).

13–18 (GAGKGT) is a binding site for ATP. The interval 33–66 (TTGDALRANKTKDITHLDVEYDTPGAYMDAGELV) is NMP. Residues T34, R39, 64–66 (ELV), 89–92 (GYPR), and Q96 contribute to the AMP site. Residues 125 to 162 (GRRVCEDCGATFHVSFNQPETEGVCDACGGSLYQREDD) form an LID region. Position 126 (R126) interacts with ATP. Residues C129 and C132 each coordinate Zn(2+). Residue 135 to 136 (TF) participates in ATP binding. Zn(2+) is bound by residues C149 and C152. AMP-binding residues include R159 and R170. R198 is an ATP binding site.

It belongs to the adenylate kinase family. Monomer.

It localises to the cytoplasm. It carries out the reaction AMP + ATP = 2 ADP. It functions in the pathway purine metabolism; AMP biosynthesis via salvage pathway; AMP from ADP: step 1/1. In terms of biological role, catalyzes the reversible transfer of the terminal phosphate group between ATP and AMP. Plays an important role in cellular energy homeostasis and in adenine nucleotide metabolism. The polypeptide is Adenylate kinase (Halobacterium salinarum (strain ATCC 700922 / JCM 11081 / NRC-1) (Halobacterium halobium)).